The chain runs to 452 residues: Argininosuccinate lyase (452 aa).

Residues 431–452 are disordered; the sequence is AFRKDSTGSTSPKWSFRAMRRA.

This sequence belongs to the lyase 1 family. Argininosuccinate lyase subfamily.

It localises to the cytoplasm. It catalyses the reaction 2-(N(omega)-L-arginino)succinate = fumarate + L-arginine. It functions in the pathway amino-acid biosynthesis; L-arginine biosynthesis; L-arginine from L-ornithine and carbamoyl phosphate: step 3/3. This Tremblaya princeps protein is Argininosuccinate lyase.